The primary structure comprises 162 residues: 2-C-methyl-D-erythritol 2,4-cyclodiphosphate synthase (162 aa).

The a divalent metal cation site is built by Asp10 and His12. 4-CDP-2-C-methyl-D-erythritol 2-phosphate-binding positions include 10 to 12 and 36 to 37; these read DVH and HS. Position 44 (His44) interacts with a divalent metal cation. 4-CDP-2-C-methyl-D-erythritol 2-phosphate is bound by residues 58-60, 63-67, 102-108, 134-137, Phe141, and Arg144; these read DIG, FPDTD, AQAPKMA, and TTTE.

This sequence belongs to the IspF family. As to quaternary structure, homotrimer. A divalent metal cation is required as a cofactor.

The catalysed reaction is 4-CDP-2-C-methyl-D-erythritol 2-phosphate = 2-C-methyl-D-erythritol 2,4-cyclic diphosphate + CMP. It functions in the pathway isoprenoid biosynthesis; isopentenyl diphosphate biosynthesis via DXP pathway; isopentenyl diphosphate from 1-deoxy-D-xylulose 5-phosphate: step 4/6. Its function is as follows. Involved in the biosynthesis of isopentenyl diphosphate (IPP) and dimethylallyl diphosphate (DMAPP), two major building blocks of isoprenoid compounds. Catalyzes the conversion of 4-diphosphocytidyl-2-C-methyl-D-erythritol 2-phosphate (CDP-ME2P) to 2-C-methyl-D-erythritol 2,4-cyclodiphosphate (ME-CPP) with a corresponding release of cytidine 5-monophosphate (CMP). The sequence is that of 2-C-methyl-D-erythritol 2,4-cyclodiphosphate synthase from Pseudoalteromonas atlantica (strain T6c / ATCC BAA-1087).